We begin with the raw amino-acid sequence, 155 residues long: Large ribosomal subunit protein eL24 (155 aa).

A disordered region spans residues 119 to 155 (VKAAKKAAAPAPAKKSAPKQKAAKVTQKAAPRVGGKR). Residues 124-133 (KAAAPAPAKK) are compositionally biased toward low complexity.

Belongs to the eukaryotic ribosomal protein eL24 family.

The protein is Large ribosomal subunit protein eL24 (RpL24) of Drosophila melanogaster (Fruit fly).